A 50-amino-acid chain; its full sequence is Large ribosomal subunit protein bL33B (50 aa).

Belongs to the bacterial ribosomal protein bL33 family.

The polypeptide is Large ribosomal subunit protein bL33B (Ligilactobacillus salivarius (strain UCC118) (Lactobacillus salivarius)).